A 721-amino-acid chain; its full sequence is Polyribonucleotide nucleotidyltransferase (721 aa).

Mg(2+) contacts are provided by Asp495 and Asp501. Positions 562-621 (PRITTIKIRPERIKDIIGPGGKTIKDITARTGTSINIEDDGSVSIASPNQDKVEEAIKMI) constitute a KH domain. Residues 631–699 (GRIYLGTVRK…RSGKIRLSRK (69 aa)) form the S1 motif domain. The tract at residues 699–721 (KEALADSAKKSEGTEPPKGEPAK) is disordered.

Belongs to the polyribonucleotide nucleotidyltransferase family. Mg(2+) is required as a cofactor.

It localises to the cytoplasm. The enzyme catalyses RNA(n+1) + phosphate = RNA(n) + a ribonucleoside 5'-diphosphate. In terms of biological role, involved in mRNA degradation. Catalyzes the phosphorolysis of single-stranded polyribonucleotides processively in the 3'- to 5'-direction. The polypeptide is Polyribonucleotide nucleotidyltransferase (Anaeromyxobacter dehalogenans (strain 2CP-1 / ATCC BAA-258)).